The sequence spans 810 residues: Protein kinase C-binding protein NELL1 (810 aa).

Residues M1 to G21 form the signal peptide. N40, N53, N83, N224, N294, and N372 each carry an N-linked (GlcNAc...) asparagine glycan. One can recognise a Laminin G-like domain in the interval A57–C227. The VWFC 1 domain occupies K271–R332. 3 disulfides stabilise this stretch: C395-C407, C401-C416, and C418-C432. Residues D434, I435, and E437 each coordinate Ca(2+). The region spanning D434 to T475 is the EGF-like 1; calcium-binding domain. 15 cysteine pairs are disulfide-bonded: C438–C451, C445–C460, C462–C474, C480–C493, C487–C502, C504–C515, C519–C529, C523–C535, C537–C546, C553–C566, C560–C575, C577–C594, C600–C613, C607–C622, and C624–C630. The Ca(2+) site is built by N453, L454, and L457. Residues E476–K516 enclose the EGF-like 2; calcium-binding domain. An N-linked (GlcNAc...) asparagine glycan is attached at N511. The EGF-like 3 domain occupies A517–E547. The 39-residue stretch at D549–Y587 folds into the EGF-like 4; calcium-binding domain. N-linked (GlcNAc...) asparagine glycosylation occurs at N562. One can recognise an EGF-like 5; calcium-binding domain in the interval D596–S631. N-linked (GlcNAc...) asparagine glycosylation occurs at N609. VWFC domains follow at residues G632–D687 and S692–V750. N708 is a glycosylation site (N-linked (GlcNAc...) asparagine).

Homotrimer. Binds to PKC beta-1. Interacts with ATRAID; the interaction promotes osteoblast cell differentiation and mineralization. Interacts with ROBO3.

The protein localises to the cytoplasm. Its subcellular location is the nucleus envelope. It localises to the secreted. In terms of biological role, plays a role in the control of cell growth and differentiation. Promotes osteoblast cell differentiation and terminal mineralization. The sequence is that of Protein kinase C-binding protein NELL1 (Nell1) from Mus musculus (Mouse).